Consider the following 451-residue polypeptide: Probable carboxypeptidase PMAA_093910 (451 aa).

The first 19 residues, 1–19 (MKVSSLLPSVLLLVGATRA), serve as a signal peptide directing secretion. The N-linked (GlcNAc...) asparagine glycan is linked to N149. D171 lines the Zn(2+) pocket. Residue E203 is the Proton acceptor of the active site. E204 is a Zn(2+) binding site. An N-linked (GlcNAc...) asparagine glycan is attached at N354.

It belongs to the peptidase M20A family. Requires Zn(2+) as cofactor.

The protein resides in the secreted. This chain is Probable carboxypeptidase PMAA_093910, found in Talaromyces marneffei (strain ATCC 18224 / CBS 334.59 / QM 7333) (Penicillium marneffei).